The following is a 1066-amino-acid chain: MSWLRTSPLRQSLTRNSGGNGSGGSGNSGNASATVRQRPIDAATDCDPRACYDSFCKHWQQAHEIIQHAGPPTHDDVLGVVSHLDYMVTLLLVELHHCNKVSLPTADAAPPTAPCLEYLLSENLLDKLYEWASTTGRYANAVRLEQLKLYELLVSHSRHQLLCHEPFLRPLLKILASSQGEIFPPDLEKRLVILLNQLCVVLMQNVHLLDLFFFSAQTQVQEQIQNGSLAAPKSGTTTNFIIFSLLIPYVHREGSLGHQARDALLLCMALSQKNSNIGHYIAQYSSICPLLVTGLGGLYSRLPNSIEVSAIDWHRITPDDVAEIPELTLFMNALEFCNAVVQVAHEMIKQQLLDFMYQGFIVPVLGPAILQTLKGKHFQTNIDSQISAMSYLDLILRSITEPGLMRAFVKFLLDTEKFDGERILDALVERLHSPDANLCMVTMALFDTLLGLHCEDLMLELLLKYMLPGKHVPISHRHKINKIDPYLNTTEFFLELTPDVMKRARDLARPKSVHELVDPGAALSSTMLPSLPSPVMSKTIGANWNYYGHYTGDSLYANIQAYLFEAHSRIAQCQRDCGKWANNYRYQKWPRQGQVRATSHALELARQFFSEFGTATPVAVAAVASSELGEKQLDSLQSIGESSGYESFKWRPDDADANDATTTTATSDPDVEHNNSSNHNNSSINSSGRRDLWRVSHSARNEILLTDLDFSEDLFAQGTVNLGPFLNAIWGKLQTFTSNSLYVNLHLTGLITRLAWYPLPLIHSLLLRSDIAITSDTPSFHQVLRMLKQQIDAELPVAENSLEIIDVARSSLIDREFRLINARKVSDNSPLHQQHHQQQQLQHTTNSTHQQQQAQQRSTYATLSAATPMHATPTSAYDPFRRSDNKRRSISASISNIFGRKSTSSTAAANPNPASSGLSQIYAFFTGAASTLVGGINGEVNSRGVAQENPRGNTCETSLSTTPRLDAQATSASSTNSSIGGSTQTLSATHSSSTLHGVESGPQTASFNSEPVSMDSVASMGIIANTSGTERSRDLALCAVLLDEWLKELAAIALEQSVVLVTEQLL.

Polar residues predominate over residues 1–15; the sequence is MSWLRTSPLRQSLTR. Residues 1-33 form a disordered region; sequence MSWLRTSPLRQSLTRNSGGNGSGGSGNSGNASA. The segment covering 18–27 has biased composition (gly residues); that stretch reads GGNGSGGSGN. Position 512 is a phosphoserine (Ser-512). 3 disordered regions span residues 647-688, 827-885, and 942-1010; these read SFKW…NSSG, DNSP…RSDN, and SRGV…FNSE. Over residues 658 to 687 the composition is skewed to low complexity; sequence NDATTTTATSDPDVEHNNSSNHNNSSINSS. At Ser-829 the chain carries Phosphoserine. A compositionally biased stretch (low complexity) spans 836–856; the sequence is HQQQQLQHTTNSTHQQQQAQQ. The segment covering 950-963 has biased composition (polar residues); sequence PRGNTCETSLSTTP. The span at 967-996 shows a compositional bias: low complexity; sequence AQATSASSTNSSIGGSTQTLSATHSSSTLH. Positions 1001 to 1010 are enriched in polar residues; sequence GPQTASFNSE.

It belongs to the FHIP family.

This chain is FHIP family protein GH13096, found in Drosophila grimshawi (Hawaiian fruit fly).